Here is a 77-residue protein sequence, read N- to C-terminus: Acyl carrier protein (77 aa).

Positions Met-1–Lys-76 constitute a Carrier domain. Position 36 is an O-(pantetheine 4'-phosphoryl)serine (Ser-36).

This sequence belongs to the acyl carrier protein (ACP) family. In terms of processing, 4'-phosphopantetheine is transferred from CoA to a specific serine of apo-ACP by AcpS. This modification is essential for activity because fatty acids are bound in thioester linkage to the sulfhydryl of the prosthetic group.

The protein localises to the cytoplasm. It participates in lipid metabolism; fatty acid biosynthesis. Functionally, carrier of the growing fatty acid chain in fatty acid biosynthesis. The chain is Acyl carrier protein from Leptospira borgpetersenii serovar Hardjo-bovis (strain JB197).